Consider the following 132-residue polypeptide: MSMTDPLGDLLTRIRNGQRANKSTVVSPASSLRANVLEVLKREGYIRGYARSELRPGVAQLSIELKYHEGQPVIREISRVSTPGRRVYSKIADLRRVANGLGITILSTPRGVMSDTEARTQNVGGEVLCEVF.

Belongs to the universal ribosomal protein uS8 family. As to quaternary structure, part of the 30S ribosomal subunit. Contacts proteins S5 and S12.

In terms of biological role, one of the primary rRNA binding proteins, it binds directly to 16S rRNA central domain where it helps coordinate assembly of the platform of the 30S subunit. The protein is Small ribosomal subunit protein uS8 of Paramagnetospirillum magneticum (strain ATCC 700264 / AMB-1) (Magnetospirillum magneticum).